We begin with the raw amino-acid sequence, 212 residues long: Dihydrophenazinedicarboxylate synthase (212 aa).

Residue S8 participates in substrate binding. Residues 63–66 (RVIA) and 78–79 (CT) each bind FMN. H80 provides a ligand contact to substrate. FMN contacts are provided by residues 84-85 (RK) and Q107. Positions 129 and 137 each coordinate substrate. Residues 142-143 (QS) and R195 each bind FMN.

This sequence belongs to the pyridoxamine 5'-phosphate oxidase family. FMN serves as cofactor.

It catalyses the reaction (1R,6R)-1,4,5,5a,6,9-hexahydrophenazine-1,6-dicarboxylate + O2 = (1R,10aS)-1,4,10,10a-tetrahydrophenazine-1,6-dicarboxylate + H2O2. It carries out the reaction (1R,10aS)-1,4,10,10a-tetrahydrophenazine-1,6-dicarboxylate + O2 = (5aS)-5,5a-dihydrophenazine-1,6-dicarboxylate + H2O2. The catalysed reaction is (1R,10aS)-1,4,10,10a-tetrahydrophenazine-1-carboxylate + O2 = (10aS)-10,10a-dihydrophenazine-1-carboxylate + H2O2. The enzyme catalyses (1R)-1,4,5,10-tetrahydrophenazine-1-carboxylate + O2 = (10aS)-10,10a-dihydrophenazine-1-carboxylate + H2O2. It participates in antibiotic biosynthesis; phenazine biosynthesis. Involved in the biosynthesis of the antibiotic phenazine, a nitrogen-containing heterocyclic molecule having important roles in virulence, competition and biological control. Catalyzes several oxidations in the terminal steps of core phenazine biosynthesis. It oxidizes both hexahydrophenazine-1,6-dicarboxylic acid (HHPDC) and tetrahydrophenazine-1-carboxylic acid (THPCA) and thereby contributes to the generation of both phenazine-1,6-dicarboxylic acid (PDC) and phenazine-1-carboxylic acid (PCA). It synthesizes phenazines in their reduced form, which are the likely end products in vivo. In Burkholderia lata (strain ATCC 17760 / DSM 23089 / LMG 22485 / NCIMB 9086 / R18194 / 383), this protein is Dihydrophenazinedicarboxylate synthase.